Here is a 100-residue protein sequence, read N- to C-terminus: ESAT-6-like protein EsxB (100 aa).

Residues 80-100 (GTQYTSTDEDQAGTLASSMNI) form a disordered region.

It belongs to the WXG100 family. CFP-10 subfamily. In terms of assembly, forms a tight 1:1 complex with EsxA. An artificial EsxA-EsxB heterodimer interacts with EspA.

The protein localises to the secreted. Its function is as follows. An exported protein. Plays a role in DNA conjugation, in at least a donor strain. In Mycolicibacterium smegmatis (strain ATCC 700084 / mc(2)155) (Mycobacterium smegmatis), this protein is ESAT-6-like protein EsxB.